We begin with the raw amino-acid sequence, 152 residues long: Xanthine-guanine phosphoribosyltransferase (152 aa).

5-phospho-alpha-D-ribose 1-diphosphate is bound by residues 37–38 (RG), Arg-69, and 88–96 (DDLVDTGGT). Residue Arg-69 coordinates GMP. Asp-89 is a Mg(2+) binding site. Guanine is bound by residues Asp-92 and Ile-135. Positions 92 and 135 each coordinate xanthine. GMP-binding positions include 92-96 (DTGGT) and 134-135 (WI).

The protein belongs to the purine/pyrimidine phosphoribosyltransferase family. XGPT subfamily. In terms of assembly, homotetramer. Mg(2+) is required as a cofactor.

The protein resides in the cell inner membrane. It carries out the reaction GMP + diphosphate = guanine + 5-phospho-alpha-D-ribose 1-diphosphate. The enzyme catalyses XMP + diphosphate = xanthine + 5-phospho-alpha-D-ribose 1-diphosphate. The catalysed reaction is IMP + diphosphate = hypoxanthine + 5-phospho-alpha-D-ribose 1-diphosphate. It participates in purine metabolism; GMP biosynthesis via salvage pathway; GMP from guanine: step 1/1. The protein operates within purine metabolism; XMP biosynthesis via salvage pathway; XMP from xanthine: step 1/1. Purine salvage pathway enzyme that catalyzes the transfer of the ribosyl-5-phosphate group from 5-phospho-alpha-D-ribose 1-diphosphate (PRPP) to the N9 position of the 6-oxopurines guanine and xanthine to form the corresponding ribonucleotides GMP (guanosine 5'-monophosphate) and XMP (xanthosine 5'-monophosphate), with the release of PPi. To a lesser extent, also acts on hypoxanthine. The sequence is that of Xanthine-guanine phosphoribosyltransferase from Pectobacterium atrosepticum (strain SCRI 1043 / ATCC BAA-672) (Erwinia carotovora subsp. atroseptica).